Reading from the N-terminus, the 104-residue chain is GYLGGYAAPAISYAAPAVSYAAPAVAYAAPAAVAPAALTSQSSNILRSYGNLGQVSTYTKTVDTPYSSVTKSDVRVSNDAIAHVAAPALAYAAPAAYAAPAYYH.

7 consecutive repeat copies span residues 7–10, 14–17, 21–24, 28–31, 85–88, 92–95, and 98–101.

Functionally, component of the cuticle of migratory locust which contains more than 100 different structural proteins. This is Cuticle protein 67, isoform B from Locusta migratoria (Migratory locust).